The following is a 166-amino-acid chain: NAD(P)H-quinone oxidoreductase subunit I, chloroplastic (166 aa).

2 consecutive 4Fe-4S ferredoxin-type domains span residues Gly-55–Lys-84 and Leu-95–Glu-124. Positions 64, 67, 70, 74, 104, 107, 110, and 114 each coordinate [4Fe-4S] cluster.

Belongs to the complex I 23 kDa subunit family. In terms of assembly, NDH is composed of at least 16 different subunits, 5 of which are encoded in the nucleus. The cofactor is [4Fe-4S] cluster.

The protein resides in the plastid. The protein localises to the chloroplast thylakoid membrane. It catalyses the reaction a plastoquinone + NADH + (n+1) H(+)(in) = a plastoquinol + NAD(+) + n H(+)(out). It carries out the reaction a plastoquinone + NADPH + (n+1) H(+)(in) = a plastoquinol + NADP(+) + n H(+)(out). Functionally, NDH shuttles electrons from NAD(P)H:plastoquinone, via FMN and iron-sulfur (Fe-S) centers, to quinones in the photosynthetic chain and possibly in a chloroplast respiratory chain. The immediate electron acceptor for the enzyme in this species is believed to be plastoquinone. Couples the redox reaction to proton translocation, and thus conserves the redox energy in a proton gradient. In Pericome caudata (Mountain tail-leaf), this protein is NAD(P)H-quinone oxidoreductase subunit I, chloroplastic.